We begin with the raw amino-acid sequence, 865 residues long: Prominin-1 (865 aa).

Residues 1–19 (MALVLGSLLLLGLCGNSFS) form the signal peptide. The Extracellular segment spans residues 20–108 (GGQPSSTDAP…GLKIVYYEAG (89 aa)). A helical membrane pass occupies residues 109–129 (IILCCVLGLLFIILMPLVGYF). Residues 130–157 (FCMCRCCNKCGGEMHQRQKENGPFLRKC) are Cytoplasmic-facing. The chain crosses the membrane as a helical span at residues 158-178 (FAISLLVICIIISIGIFYGFV). The Extracellular segment spans residues 179–433 (ANHQVRTRIK…LPTLEEYDSY (255 aa)). The N-linked (GlcNAc...) asparagine glycan is linked to asparagine 220. Lysine 225, lysine 257, and lysine 264 each carry N6-acetyllysine. N-linked (GlcNAc...) asparagine glycans are attached at residues asparagine 274, asparagine 395, and asparagine 414. The helical transmembrane segment at 434–454 (WWLGGLVICSLLTLIVIFYYL) threads the bilayer. The Cytoplasmic portion of the chain corresponds to 455-486 (GLLCGVCGYDRHATPTTRGCVSNTGGVFLMVG). A helical transmembrane segment spans residues 487-507 (VGLSFLFCWILMIIVVLTFVF). Residues 508–792 (GANVEKLICE…LCSYIIDPLN (285 aa)) lie on the Extracellular side of the membrane. N-linked (GlcNAc...) asparagine glycosylation is found at asparagine 548, asparagine 580, asparagine 729, and asparagine 730. A helical membrane pass occupies residues 793–813 (LFWFGIGKATVFLLPALIFAV). The Cytoplasmic portion of the chain corresponds to 814 to 865 (KLAKYYRRMDSEDVYDDVETIPMKNMENGNNGYHKDHVYGIHNPVMTSPSQH). The residue at position 863 (serine 863) is a Phosphoserine.

This sequence belongs to the prominin family. Interacts with CDHR1 and with actin filaments. Interacts with NAT8 and NAT8B. Isoform 1 and isoform 2 are glycosylated. Post-translationally, acetylation at Lys-225, Lys-257 and Lys-264 by NAT8 and NAT8B may control PROM1 protein expression and its function in cell apoptosis. As to expression, isoform 1 is selectively expressed on CD34 hematopoietic stem and progenitor cells in adult and fetal bone marrow, fetal liver, cord blood and adult peripheral blood. Isoform 1 is not detected on other blood cells. Isoform 1 is also expressed in a number of non-lymphoid tissues including retina, pancreas, placenta, kidney, liver, lung, brain and heart. Found in saliva within small membrane particles. Isoform 2 is predominantly expressed in fetal liver, skeletal muscle, kidney, and heart as well as adult pancreas, kidney, liver, lung, and placenta. Isoform 2 is highly expressed in fetal liver, low in bone marrow, and barely detectable in peripheral blood. Isoform 2 is expressed on hematopoietic stem cells and in epidermal basal cells (at protein level). Expressed in adult retina by rod and cone photoreceptor cells (at protein level).

The protein localises to the apical cell membrane. It localises to the cell projection. It is found in the microvillus membrane. The protein resides in the cilium. Its subcellular location is the photoreceptor outer segment. The protein localises to the endoplasmic reticulum. It localises to the endoplasmic reticulum-Golgi intermediate compartment. May play a role in cell differentiation, proliferation and apoptosis. Binds cholesterol in cholesterol-containing plasma membrane microdomains and may play a role in the organization of the apical plasma membrane in epithelial cells. During early retinal development acts as a key regulator of disk morphogenesis. Involved in regulation of MAPK and Akt signaling pathways. In neuroblastoma cells suppresses cell differentiation such as neurite outgrowth in a RET-dependent manner. The polypeptide is Prominin-1 (PROM1) (Homo sapiens (Human)).